The following is a 261-amino-acid chain: Class II histocompatibility antigen, M alpha chain (261 aa).

Residues 1 to 26 form the signal peptide; it reads MEHEQKSGAVLLRLLRLLWLLPHSWA. Residues 27–124 form an alpha-1 region; sequence VLEASTPVLW…KLEGQIPVSR (98 aa). Topologically, residues 27-231 are lumenal; it reads VLEASTPVLW…ALPSDLLENA (205 aa). Residue N41 is glycosylated (N-linked (GlcNAc...) asparagine). Disulfide bonds link C50–C105 and C147–C202. Residues 114-215 form the Ig-like C1-type domain; the sequence is PKLEGQIPVS…HEIDRYTAIA (102 aa). The segment at 125 to 217 is alpha-2; that stretch reads GLSVAEVFTL…IDRYTAIAYW (93 aa). A connecting peptide region spans residues 218–231; the sequence is VPQNALPSDLLENA. Residues 232–252 form a helical membrane-spanning segment; that stretch reads LCGVAFALGVLGTIIGIVFFL. Residues 253–261 are Cytoplasmic-facing; that stretch reads CSQRPCSGD.

The protein belongs to the MHC class II family. Heterodimer of an alpha chain (DMA) and a beta chain (DMB). Interacts with MHCII; this interaction mediates rapid selection of high-affinity peptides.

It localises to the late endosome membrane. The protein resides in the lysosome membrane. Functionally, plays a critical role in catalyzing the release of class II-associated invariant chain peptide (CLIP) from newly synthesized MHC class II molecules and freeing the peptide binding site for acquisition of antigenic peptides. This Mus musculus (Mouse) protein is Class II histocompatibility antigen, M alpha chain (H2-DMa).